The following is a 252-amino-acid chain: Imidazole glycerol phosphate synthase subunit HisF (252 aa).

Residues aspartate 11 and aspartate 130 contribute to the active site.

It belongs to the HisA/HisF family. As to quaternary structure, heterodimer of HisH and HisF.

Its subcellular location is the cytoplasm. It carries out the reaction 5-[(5-phospho-1-deoxy-D-ribulos-1-ylimino)methylamino]-1-(5-phospho-beta-D-ribosyl)imidazole-4-carboxamide + L-glutamine = D-erythro-1-(imidazol-4-yl)glycerol 3-phosphate + 5-amino-1-(5-phospho-beta-D-ribosyl)imidazole-4-carboxamide + L-glutamate + H(+). Its pathway is amino-acid biosynthesis; L-histidine biosynthesis; L-histidine from 5-phospho-alpha-D-ribose 1-diphosphate: step 5/9. Its function is as follows. IGPS catalyzes the conversion of PRFAR and glutamine to IGP, AICAR and glutamate. The HisF subunit catalyzes the cyclization activity that produces IGP and AICAR from PRFAR using the ammonia provided by the HisH subunit. In Staphylococcus aureus (strain bovine RF122 / ET3-1), this protein is Imidazole glycerol phosphate synthase subunit HisF.